The chain runs to 163 residues: Protein-export protein SecB (163 aa).

Belongs to the SecB family. Homotetramer, a dimer of dimers. One homotetramer interacts with 1 SecA dimer.

It localises to the cytoplasm. Its function is as follows. One of the proteins required for the normal export of preproteins out of the cell cytoplasm. It is a molecular chaperone that binds to a subset of precursor proteins, maintaining them in a translocation-competent state. It also specifically binds to its receptor SecA. In Brucella canis (strain ATCC 23365 / NCTC 10854 / RM-666), this protein is Protein-export protein SecB.